A 597-amino-acid chain; its full sequence is MSKTEVRLRQPIVVVLGHVDHGKTTLLDKIRGTAVVKKEPGEMTQEVGASFVPSSVIEKVAQPLKGIIPVKLEIPGLLFIDTPGHELFSNLRRRGGSVADIAILVVDITEGFQKQTIESIEILKDKKVPFLVAANKIDRIPGWRPIENETFTKSFRSQSQSVQKALDNYVYKLVMQLAEMGFNAERFDRVRDFTRYVSIVPVSGKTGEGLPELLALLAGLTQQYLKTRLRAVEGPAKGVILEVKEEQGLGHTIDVIIYDGILRKSDTIVLGGINGVIVTKIRNILLPAPLQDMRMTRSGYRSIDEISAAAGVKISAPGLEEALAGSPLYVANDEAKLQEARKLIEEELSKVRFSKNSTGIVVKADSLGSLESLVAGFEKIGIPVRVADIGPITKRDLIEAELSAKEVEEYGIIAAFRVKPIPGLDTSKVKIIYNDIIYQLIDDTIKYIEDLRERRKRRTLDSLVLPGKIKILPGYVFRRSDPAIVGVEVLGGVVRPKYPLIREDGQRVGEVLAIQDNKKNIERATKGMEVSMSIKGNIMIGRQVQEGDVLYTDVPQEDLEILFKNYKDSITEDMMEVIKELIKIKKAENPLYGIFIQ.

A tr-type G domain is found at 8 to 225 (LRQPIVVVLG…LLAGLTQQYL (218 aa)). The interval 17–24 (GHVDHGKT) is G1. A GTP-binding site is contributed by 17-24 (GHVDHGKT). The interval 42-46 (EMTQE) is G2. Residues 81–84 (DTPG) are G3. Residues 81 to 85 (DTPGH) and 135 to 138 (NKID) each bind GTP. The G4 stretch occupies residues 135-138 (NKID). A G5 region spans residues 203–205 (SGK).

Belongs to the TRAFAC class translation factor GTPase superfamily. Classic translation factor GTPase family. IF-2 subfamily.

Its function is as follows. Function in general translation initiation by promoting the binding of the formylmethionine-tRNA to ribosomes. Seems to function along with eIF-2. This is Probable translation initiation factor IF-2 from Metallosphaera sedula (strain ATCC 51363 / DSM 5348 / JCM 9185 / NBRC 15509 / TH2).